Here is a 428-residue protein sequence, read N- to C-terminus: Cytochrome c biogenesis protein CcsB (428 aa).

A run of 3 helical transmembrane segments spans residues 14–34 (LRFAILLIIFIAISSGVGTFI), 72–92 (SNWFLFSLILLCISLAACSFR), and 162–182 (LGPIIVHIGLIILLIGSAYGN).

Belongs to the Ccs1/CcsB family. As to quaternary structure, may interact with CcsA.

It localises to the cellular thylakoid membrane. Functionally, required during biogenesis of c-type cytochromes (cytochrome c6 and cytochrome f) at the step of heme attachment. The chain is Cytochrome c biogenesis protein CcsB from Prochlorococcus marinus subsp. pastoris (strain CCMP1986 / NIES-2087 / MED4).